The following is a 1679-amino-acid chain: Maestro heat-like repeat-containing protein family member 2A (1679 aa).

15 HEAT repeats span residues 68–91 (ATTD…ISTQ), 92–128 (RKMN…QMRD), 190–229 (MPYM…TVQF), 293–313 (EQVY…GHWP), 314–350 (LFPS…ELHV), 380–417 (SYPK…ADDP), 422–459 (KTIY…SGFQ), 571–610 (PAPQ…SIAP), 614–654 (DMWE…SLKK), 737–774 (KTVL…ETVK), 848–887 (SALT…MKPF), 991–1028 (GQFG…LHVS), 1219–1261 (DPLM…SHGP), 1387–1425 (KLLR…GAPR), and 1632–1669 (MDLV…CNQH).

In Mus musculus (Mouse), this protein is Maestro heat-like repeat-containing protein family member 2A (Mroh2a).